The primary structure comprises 77 residues: U8-lycotoxin-Ls1w (77 aa).

The N-terminal stretch at 1 to 20 is a signal peptide; the sequence is MKLIIFTGLVLFAIVSLIEA. Positions 21–26 are excised as a propeptide; it reads QAENEK.

Belongs to the neurotoxin 19 (CSTX) family. 08 (U8-Lctx) subfamily. In terms of processing, contains 4 disulfide bonds. As to expression, expressed by the venom gland.

The protein localises to the secreted. The sequence is that of U8-lycotoxin-Ls1w from Lycosa singoriensis (Wolf spider).